We begin with the raw amino-acid sequence, 729 residues long: Triadin (729 aa).

The interval 1-28 (MTEITAEGNASTTTTVIDSKNGSVPKSP) is disordered. Topologically, residues 1-47 (MTEITAEGNASTTTTVIDSKNGSVPKSPGKVLKRTVTEDIVTTFSSP) are cytoplasmic. Over residues 8–24 (GNASTTTTVIDSKNGSV) the composition is skewed to polar residues. A helical transmembrane segment spans residues 48 to 68 (AAWLLVIALIITWSAVAIVMF). Residues 69-729 (DLVDYKNFSA…NSPGQKQQGQ (661 aa)) lie on the Lumenal side of the membrane. N-linked (GlcNAc...) asparagine glycosylation occurs at Asn-75. Residues 117 to 129 (EDEEDDDGDEDTD) are compositionally biased toward acidic residues. 3 disordered regions span residues 117–265 (EDEE…EQKD), 281–682 (DLKP…PTKQ), and 705–729 (PFTP…QQGQ). Basic and acidic residues-rich tracts occupy residues 130–265 (KGEI…EQKD), 309–357 (LEEK…KASE), 371–433 (AKKD…KEEI), 444–509 (GKKE…EVKP), 516–531 (GKKE…KEAK), 538–562 (VQIH…EKVL), 580–598 (KKAE…DKPK), and 609–674 (ESGK…KEGT). The N-linked (GlcNAc...) asparagine glycan is linked to Asn-647. Residues 715 to 729 (SSGQANSPGQKQQGQ) show a composition bias toward polar residues.

In terms of assembly, homooligomer of variable subunit number; disulfide-linked. Interacts with CASQ1 and RYR1 in skeletal muscle. Interacts with CASQ2. Post-translationally, phosphorylated by CaMK2. N-glycosylated.

It localises to the cell membrane. It is found in the sarcoplasmic reticulum membrane. Contributes to the regulation of lumenal Ca2+ release via the sarcoplasmic reticulum calcium release channels RYR1 and RYR2, a key step in triggering skeletal and heart muscle contraction. Required for normal organization of the triad junction, where T-tubules and the sarcoplasmic reticulum terminal cisternae are in close contact. Required for normal skeletal muscle strength. Plays a role in excitation-contraction coupling in the heart and in regulating the rate of heart beats. In Homo sapiens (Human), this protein is Triadin (TRDN).